The primary structure comprises 232 residues: Flagellar L-ring protein (232 aa).

Positions 1 to 21 (MQKNAAHTYAISSLLVLSLTG) are cleaved as a signal peptide. Residue cysteine 22 is the site of N-palmitoyl cysteine attachment. A lipid anchor (S-diacylglycerol cysteine) is attached at cysteine 22.

Belongs to the FlgH family. As to quaternary structure, the basal body constitutes a major portion of the flagellar organelle and consists of four rings (L,P,S, and M) mounted on a central rod.

The protein localises to the cell outer membrane. It localises to the bacterial flagellum basal body. Assembles around the rod to form the L-ring and probably protects the motor/basal body from shearing forces during rotation. In Shigella boydii serotype 18 (strain CDC 3083-94 / BS512), this protein is Flagellar L-ring protein.